The following is a 372-amino-acid chain: N-methyl-L-tryptophan oxidase (372 aa).

Residue Asp4–His34 coordinates FAD. An S-8alpha-FAD cysteine modification is found at Cys308.

This sequence belongs to the MSOX/MTOX family. MTOX subfamily. As to quaternary structure, monomer. The cofactor is FAD.

It carries out the reaction N(alpha)-methyl-L-tryptophan + O2 + H2O = L-tryptophan + formaldehyde + H2O2. In terms of biological role, catalyzes the oxidative demethylation of N-methyl-L-tryptophan. This chain is N-methyl-L-tryptophan oxidase, found in Shigella dysenteriae serotype 1 (strain Sd197).